Consider the following 163-residue polypeptide: Superoxide dismutase [Mn] (163 aa).

Residues His2, His50, Asp134, and His138 each contribute to the Mn(2+) site.

Belongs to the iron/manganese superoxide dismutase family. Requires Mn(2+) as cofactor.

It carries out the reaction 2 superoxide + 2 H(+) = H2O2 + O2. Its function is as follows. Destroys superoxide anion radicals which are normally produced within the cells and which are toxic to biological systems. This is Superoxide dismutase [Mn] (sodA) from Mycobacterium scrofulaceum.